The following is a 178-amino-acid chain: Cytochrome b6-f complex iron-sulfur subunit (178 aa).

Residues 20–42 (LLTFGTATGVALGALYPVANYFM) traverse the membrane as a helical segment. Residues 65 to 161 (KTGWLATHQA…VDIEDDAVLV (97 aa)) form the Rieske domain. Positions 107, 109, 125, and 128 each coordinate [2Fe-2S] cluster. C112 and C127 are oxidised to a cystine.

Belongs to the Rieske iron-sulfur protein family. The 4 large subunits of the cytochrome b6-f complex are cytochrome b6, subunit IV (17 kDa polypeptide, PetD), cytochrome f and the Rieske protein, while the 4 small subunits are PetG, PetL, PetM and PetN. The complex functions as a dimer. It depends on [2Fe-2S] cluster as a cofactor.

The protein resides in the cellular thylakoid membrane. It catalyses the reaction 2 oxidized [plastocyanin] + a plastoquinol + 2 H(+)(in) = 2 reduced [plastocyanin] + a plastoquinone + 4 H(+)(out). Functionally, component of the cytochrome b6-f complex, which mediates electron transfer between photosystem II (PSII) and photosystem I (PSI), cyclic electron flow around PSI, and state transitions. The polypeptide is Cytochrome b6-f complex iron-sulfur subunit (Prochlorococcus marinus (strain MIT 9312)).